Consider the following 76-residue polypeptide: RNA-binding protein KhpA (76 aa).

Residues serine 29–aspartate 76 form the KH domain.

This sequence belongs to the KhpA RNA-binding protein family. In terms of assembly, forms a complex with KhpB.

It is found in the cytoplasm. Functionally, a probable RNA chaperone. Forms a complex with KhpB which binds to cellular RNA and controls its expression. Plays a role in peptidoglycan (PG) homeostasis and cell length regulation. In Halalkalibacterium halodurans (strain ATCC BAA-125 / DSM 18197 / FERM 7344 / JCM 9153 / C-125) (Bacillus halodurans), this protein is RNA-binding protein KhpA.